A 689-amino-acid polypeptide reads, in one-letter code: Glycine--tRNA ligase beta subunit (689 aa).

It belongs to the class-II aminoacyl-tRNA synthetase family. In terms of assembly, tetramer of two alpha and two beta subunits.

It localises to the cytoplasm. The catalysed reaction is tRNA(Gly) + glycine + ATP = glycyl-tRNA(Gly) + AMP + diphosphate. In Hamiltonella defensa subsp. Acyrthosiphon pisum (strain 5AT), this protein is Glycine--tRNA ligase beta subunit.